We begin with the raw amino-acid sequence, 584 residues long: Isopropyl malate synthase htyA (584 aa).

One can recognise a Pyruvate carboxyltransferase domain in the interval 39-317 (PIWLSTDLRD…ETGLDFSNLP (279 aa)).

The protein belongs to the alpha-IPM synthase/homocitrate synthase family. LeuA type 2 subfamily.

It carries out the reaction 3-methyl-2-oxobutanoate + acetyl-CoA + H2O = (2S)-2-isopropylmalate + CoA + H(+). It participates in antifungal biosynthesis. In terms of biological role, isopropyl malate synthase; part of the gene cluster that mediates the de novo generation of L-homotyrosine from acetyl-CoA and 4-hydroxyphenyl-pyruvate. L-homotyrosine is a building block of echinocandin B, a fungal lipidated cyclic hexapeptide that acts as an antifungal agent. L-homotyrosine 4-hydroxyphenyl-pyruvate first undergoes an aldol-type condensation by htyA with the C-2 of acetyl-CoA followed by the release of CoA to form 2-(4-hydroxybenzyl)-malate. This is followed by isomerization of 2-(4-hydroxy-benzyl)-malate to 3-(4-hydroxybenzyl)-malate by htyD. Thereafter, 3-(4-hydroxybenzyl)-malate undergoes decarboxylation and oxidation to form 2-oxo-4-(4-hydroxybenzyl)butanoic acid, coupled to reduction of NAD(+) to NADH by htyC. The product then undergoes transamination catalyzed by htyB to form L-homotyrosine. The protein is Isopropyl malate synthase htyA of Aspergillus rugulosus (Emericella rugulosa).